We begin with the raw amino-acid sequence, 405 residues long: Divinyl chlorophyllide a 8-vinyl-reductase, chloroplastic (405 aa).

A chloroplast-targeting transit peptide spans 1–58; that stretch reads MAALLLSSHLTAASSSSTTSPTARPAPSFVSFRAANAAPKGARRGWPFLASSVEPPPA.

It is found in the plastid. Its subcellular location is the chloroplast. It catalyses the reaction protochlorophyllide a + NADP(+) = 3,8-divinyl protochlorophyllide a + NADPH + H(+). Its pathway is porphyrin-containing compound metabolism; chlorophyll biosynthesis. Its function is as follows. Catalyzes the conversion of divinyl chlorophyllide to monovinyl chlorophyllide. Reduces the 8-vinyl group of the tetrapyrrole to an ethyl group using NADPH as the reductant. Can use (3,8-divinyl)-chlorophyllide a (DV-Chlidea) &gt; (3,8-divinyl)-chlorophyll a (DV-Chla) &gt; (3,8-divinyl)-protochlorophyllide a (DV-Pchlidea) &gt; (3,8-divinyl)-magnesium-protoporphyrin IX monomethyl ester (DV-MPE) &gt; (3,8-divinyl)-magnesium-protoporphyrin IX (DV-Mg-Proto) as substrates. This Oryza sativa subsp. indica (Rice) protein is Divinyl chlorophyllide a 8-vinyl-reductase, chloroplastic (DVR).